We begin with the raw amino-acid sequence, 505 residues long: Maturase K (505 aa).

It belongs to the intron maturase 2 family. MatK subfamily.

Its subcellular location is the plastid. The protein localises to the chloroplast. Its function is as follows. Usually encoded in the trnK tRNA gene intron. Probably assists in splicing its own and other chloroplast group II introns. In Chiococca alba (West Indian milkberry), this protein is Maturase K.